The chain runs to 474 residues: UDP-glycosyltransferase 71E1 (474 aa).

UDP-alpha-D-glucose is bound by residues S275, 341–342, 359–367, and 381–384; these read WA, HCGWNSTLE, and YAEQ.

This sequence belongs to the UDP-glycosyltransferase family.

Functionally, may glycosylate diterpenes or flavonols in leaves. The polypeptide is UDP-glycosyltransferase 71E1 (Stevia rebaudiana (Stevia)).